The chain runs to 138 residues: ATP synthase epsilon chain (138 aa).

The protein belongs to the ATPase epsilon chain family. F-type ATPases have 2 components, CF(1) - the catalytic core - and CF(0) - the membrane proton channel. CF(1) has five subunits: alpha(3), beta(3), gamma(1), delta(1), epsilon(1). CF(0) has three main subunits: a, b and c.

The protein resides in the cell inner membrane. Produces ATP from ADP in the presence of a proton gradient across the membrane. The chain is ATP synthase epsilon chain from Geobacter sulfurreducens (strain ATCC 51573 / DSM 12127 / PCA).